Reading from the N-terminus, the 304-residue chain is Quinolinate synthase (304 aa).

His-24 and Ser-41 together coordinate iminosuccinate. A [4Fe-4S] cluster-binding site is contributed by Cys-86. Iminosuccinate contacts are provided by residues 112–114 (YVN) and Ser-129. [4Fe-4S] cluster is bound at residue Cys-171. Iminosuccinate contacts are provided by residues 197–199 (HPE) and Thr-214. Cys-259 lines the [4Fe-4S] cluster pocket.

It belongs to the quinolinate synthase family. Type 2 subfamily. Requires [4Fe-4S] cluster as cofactor.

The protein resides in the cytoplasm. It catalyses the reaction iminosuccinate + dihydroxyacetone phosphate = quinolinate + phosphate + 2 H2O + H(+). It participates in cofactor biosynthesis; NAD(+) biosynthesis; quinolinate from iminoaspartate: step 1/1. Functionally, catalyzes the condensation of iminoaspartate with dihydroxyacetone phosphate to form quinolinate. This is Quinolinate synthase from Geotalea uraniireducens (strain Rf4) (Geobacter uraniireducens).